We begin with the raw amino-acid sequence, 707 residues long: MNTDTQKHEDAMSTTTPARAPHDDAPSGQQPGQGRVGAGLFEPKQLVKSLPDAFRKLDPRVMAKSPVMFVVLVGSVLTTAFSVTEPGDWFGWTISAWLWLTVLFANLAEAVAEGRGKAQADTLRRAKTDTVARRADGTTVPGTGLTVGDLVVCEAGDVIPGDGDVVEGVASVDESAITGESAPVIRESGGDRSAVTGGTKVLSDRIVVRITTKPGETFIDRMINLVEGAARQKTPNEIALNILLASLTVVFLLACATLPPFADYAGTHLDMIVLVALLVCLIPTTIGALLSAIGIAGMDRLVQRNVLAMSGRAVEAAGDVSTLLLDKTGTITLGNRQAAEFVPVRGVTEAELADAAQLSSLADETPEGRSIVVLAKEKYGLRERHQGELVGAEWIGFTAQTRMSGVDADGRKVRKGAAGSVVAWVRERGGSGTEDADTAVERISAAGGTPLLVAVEDERGARVLGVVHLKDVVKQGMRERFDELRRMGIRTVMITGDNPLTAKAIADEAGVDDYLAEATPEDKMALIKREQAGGKLVAMTGDGTNDAPALAQADVGVAMNTGTSAAKEAGNMVDLDSNPTKLIEIVEIGKQLLITRGALTTFSIANDVAKYFAIIPALFAAVYPGLDKLNIMGLSSPDSAILSAVVFNALIILVLVPLALKGVRYRPTSADRMLRRNLGVYGLGGLVAPFIGIKLIDLIVSLIPGIG.

Over residues 1-11 (MNTDTQKHEDA) the composition is skewed to basic and acidic residues. Residues 1-37 (MNTDTQKHEDAMSTTTPARAPHDDAPSGQQPGQGRVG) are disordered. 4 helical membrane passes run 61–81 (VMAKSPVMFVVLVGSVLTTAF), 89–109 (WFGWTISAWLWLTVLFANLAE), 238–258 (IALNILLASLTVVFLLACATL), and 271–291 (MIVLVALLVCLIPTTIGALLS). Residue D326 is the 4-aspartylphosphate intermediate of the active site. ATP contacts are provided by residues D363, E367, 397–404 (FTAQTRMS), and K415. Mg(2+) is bound by residues D542 and D546. Helical transmembrane passes span 612-632 (FAIIPALFAAVYPGLDKLNIM), 640-660 (AILSAVVFNALIILVLVPLAL), and 683-703 (LGGLVAPFIGIKLIDLIVSLI).

The protein belongs to the cation transport ATPase (P-type) (TC 3.A.3) family. Type IA subfamily. The system is composed of three essential subunits: KdpA, KdpB and KdpC.

It localises to the cell membrane. The catalysed reaction is K(+)(out) + ATP + H2O = K(+)(in) + ADP + phosphate + H(+). Functionally, part of the high-affinity ATP-driven potassium transport (or Kdp) system, which catalyzes the hydrolysis of ATP coupled with the electrogenic transport of potassium into the cytoplasm. This subunit is responsible for energy coupling to the transport system and for the release of the potassium ions to the cytoplasm. In Streptomyces coelicolor (strain ATCC BAA-471 / A3(2) / M145), this protein is Potassium-transporting ATPase ATP-binding subunit.